A 656-amino-acid chain; its full sequence is Putative cysteine-rich receptor-like protein kinase 32 (656 aa).

A signal peptide spans 1-23 (MCLQNLLSILCFVLAISFGYVSA). Gnk2-homologous domains lie at 24–126 (QKCV…NSSF) and 134–238 (PTMV…GSEY). The Extracellular segment spans residues 24–262 (QKCVDSMFFR…PDGKTISTGA (239 aa)). Asparagine 35, asparagine 52, asparagine 61, asparagine 103, and asparagine 123 each carry an N-linked (GlcNAc...) asparagine glycan. The helical transmembrane segment at 263–283 (IVAVVVSVVIFVVLLALVLVI) threads the bilayer. The Cytoplasmic portion of the chain corresponds to 284 to 656 (RKRRQSYKTL…SASITRVTPR (373 aa)). In terms of domain architecture, Protein kinase spans 321 to 606 (FSRNNKLGKG…IFQMLTNSSI (286 aa)). Residues 327 to 335 (LGKGGFGEV) and lysine 349 each bind ATP. A Phosphotyrosine modification is found at tyrosine 394. Aspartate 454 acts as the Proton acceptor in catalysis. A Phosphoserine modification is found at serine 458. Position 494 is a phosphothreonine (threonine 494). Tyrosine 502 is subject to Phosphotyrosine.

This sequence belongs to the protein kinase superfamily. Ser/Thr protein kinase family. CRK subfamily.

It is found in the membrane. The enzyme catalyses L-seryl-[protein] + ATP = O-phospho-L-seryl-[protein] + ADP + H(+). The catalysed reaction is L-threonyl-[protein] + ATP = O-phospho-L-threonyl-[protein] + ADP + H(+). The chain is Putative cysteine-rich receptor-like protein kinase 32 (CRK32) from Arabidopsis thaliana (Mouse-ear cress).